The following is a 67-amino-acid chain: UPF0253 protein VV2574 (67 aa).

The protein belongs to the UPF0253 family.

The chain is UPF0253 protein VV2574 from Vibrio vulnificus (strain YJ016).